The sequence spans 943 residues: MSQDYKTTLHLPATDFPMRGDLPKREPAILERWERDDFYAQLRAHAKGRPLFLLHDGPPYANGQIHLGHAVNKILKDIIIKSKHLDGFDAPYIPGWDCHGLPIEIAIEKKYGKVGVTLDAVQFRQKCREYAAEQIQLQRRDFKRLGVIGDWDAPYKTLDFRFEADEIRALAKIVDKGHLIRGTKPVHWCFDCGSALAEAEIEYTDKTSPMVDVAYPALDPSALAAVFNATLPPDVQLAVPIWTTTPWTLPASLAISVGPTLDYVLVEGPTHSGQRRWLILAEALAAKALARYGIAELLIHGSAKGAAMEQHILAHPFYPDRTIPLLLGNHVSAEDGTGAVHTAPGHGQEDHQVFQQYGLLNRYSAAELNPVDARGVYLSTTPPLGELTLAGLHIWKANPLIVDALRLRGVLLAAAEMHHSYPHCWRHKTPIVFRATPQWFISMEQAALRSAALKAITHVTWYPQWGQARILSMIENRPDWTISRQRTWGVPIPLFVHRHSGAPHPRSAALMRQIADRVEQQGVDIWYSLDQTELLGTEADQYEKITDILDVWFDSGITHEAVLLERGLPKPADLYLEGADQHRGWFQSSLLTGVAMDNAAPYKQCLTHGFTVDQHGRKMSKSLGNGIEPQDIIKTLGADILRLWIASTDYSNEMSLSQEILKRTTDAYRRIRNTTRFLLGNLHGFDPTLHLVPLSDMIALDRWIVHRAFELQQTIKAAYTRYDFAEIIQKILNFCSVDLGSLYLDVTKDRLYTMHENAPGRRSAQTAMYHLTAAFVRWIAPILSFTADELWSYLPGDHADNVLFTTWYDGLAPLPPNAPLTAADFDKLLTLRDHVTKVLEPMRANGVIGAALEAEITVAADADTAARWQPLTEELRFLFITGDVTVTPANTDGFFVSAQATTKAKCARCWHYRADIGAHPTHPELCGRCITNVDGPGEQRHWF.

Positions 59–69 match the 'HIGH' region motif; the sequence is PYANGQIHLGH. L-isoleucyl-5'-AMP is bound at residue Glu-577. The short motif at 618-622 is the 'KMSKS' region element; sequence KMSKS. ATP is bound at residue Lys-621. The Zn(2+) site is built by Cys-906, Cys-909, Cys-926, and Cys-929.

It belongs to the class-I aminoacyl-tRNA synthetase family. IleS type 1 subfamily. As to quaternary structure, monomer. Zn(2+) serves as cofactor.

The protein resides in the cytoplasm. It carries out the reaction tRNA(Ile) + L-isoleucine + ATP = L-isoleucyl-tRNA(Ile) + AMP + diphosphate. In terms of biological role, catalyzes the attachment of isoleucine to tRNA(Ile). As IleRS can inadvertently accommodate and process structurally similar amino acids such as valine, to avoid such errors it has two additional distinct tRNA(Ile)-dependent editing activities. One activity is designated as 'pretransfer' editing and involves the hydrolysis of activated Val-AMP. The other activity is designated 'posttransfer' editing and involves deacylation of mischarged Val-tRNA(Ile). This Xylella fastidiosa (strain M12) protein is Isoleucine--tRNA ligase.